The following is a 714-amino-acid chain: Polyribonucleotide nucleotidyltransferase (714 aa).

Asp487 and Asp493 together coordinate Mg(2+). The region spanning 554–613 (PRIEVLQIPTDKIRDVIGTGGKVIREIVEKTGAKINIEDDGTVKVASANGESIRAAIKWI) is the KH domain. The 69-residue stretch at 623 to 691 (GQIYDGTVVK…DRGKVRLSMK (69 aa)) folds into the S1 motif domain.

It belongs to the polyribonucleotide nucleotidyltransferase family. Requires Mg(2+) as cofactor.

It localises to the cytoplasm. It catalyses the reaction RNA(n+1) + phosphate = RNA(n) + a ribonucleoside 5'-diphosphate. In terms of biological role, involved in mRNA degradation. Catalyzes the phosphorolysis of single-stranded polyribonucleotides processively in the 3'- to 5'-direction. This Afipia carboxidovorans (strain ATCC 49405 / DSM 1227 / KCTC 32145 / OM5) (Oligotropha carboxidovorans) protein is Polyribonucleotide nucleotidyltransferase.